The sequence spans 287 residues: ATP synthase gamma chain (287 aa).

It belongs to the ATPase gamma chain family. In terms of assembly, F-type ATPases have 2 components, CF(1) - the catalytic core - and CF(0) - the membrane proton channel. CF(1) has five subunits: alpha(3), beta(3), gamma(1), delta(1), epsilon(1). CF(0) has three main subunits: a, b and c.

The protein resides in the cell inner membrane. Its function is as follows. Produces ATP from ADP in the presence of a proton gradient across the membrane. The gamma chain is believed to be important in regulating ATPase activity and the flow of protons through the CF(0) complex. In Shigella boydii serotype 4 (strain Sb227), this protein is ATP synthase gamma chain.